We begin with the raw amino-acid sequence, 325 residues long: Brorin (325 aa).

The first 27 residues, 1 to 27, serve as a signal peptide directing secretion; that stretch reads MPSSTAMAVGALSSSLLVTCCLMVALC. Residues 37-121 are disordered; the sequence is AQAPEQPGQE…RPRGDTPQAE (85 aa). Basic and acidic residues-rich tracts occupy residues 44 to 56 and 64 to 78; these read GQEKREHASRDGP and RPARDEGGSGRDWKS. The short motif at 114–116 is the Mediates cell adhesion element; it reads RGD. VWFC domains follow at residues 153 to 212 and 216 to 274; these read KGCV…PQCK and NYCE…PICK.

As to quaternary structure, peripherally associated with AMPAR complex. AMPAR complex consists of an inner core made of 4 pore-forming GluA/GRIA proteins (GRIA1, GRIA2, GRIA3 and GRIA4) and 4 major auxiliary subunits arranged in a twofold symmetry. One of the two pairs of distinct binding sites is occupied either by CNIH2, CNIH3 or CACNG2, CACNG3. The other harbors CACNG2, CACNG3, CACNG4, CACNG8 or GSG1L. This inner core of AMPAR complex is complemented by outer core constituents binding directly to the GluA/GRIA proteins at sites distinct from the interaction sites of the inner core constituents. Outer core constituents include at least PRRT1, PRRT2, CKAMP44/SHISA9, FRRS1L and NRN1. The proteins of the inner and outer core serve as a platform for other, more peripherally associated AMPAR constituents, including VWC2. Alone or in combination, these auxiliary subunits control the gating and pharmacology of the AMPAR complex and profoundly impact their biogenesis and protein processing.

The protein localises to the secreted. It is found in the extracellular space. It localises to the extracellular matrix. The protein resides in the basement membrane. Its subcellular location is the synapse. Its function is as follows. BMP antagonist which may play a role in neural development. Promotes cell adhesion. In Homo sapiens (Human), this protein is Brorin (VWC2).